Reading from the N-terminus, the 623-residue chain is Myosin light chain kinase 2, skeletal/cardiac muscle (623 aa).

Disordered regions lie at residues 1 to 179 (MATE…PSCP) and 204 to 251 (GVPV…QGDT). Ala2 bears the N-acetylalanine mark. Residues 20-31 (APKAAAGEGPPA) are compositionally biased toward low complexity. Basic and acidic residues-rich tracts occupy residues 32–43 (AEKDPGPPDPQK) and 49–89 (DPEK…EKGD). Over residues 90–102 (GASAQPSASSQGP) the composition is skewed to low complexity. Positions 150–159 (GEAKEQKKVA) are enriched in basic and acidic residues. A phosphoserine mark is found at Ser169, Ser175, and Ser177. Positions 204 to 214 (GVPVTPGPTET) are enriched in low complexity. The span at 215 to 224 (EPAKVAEGEK) shows a compositional bias: basic and acidic residues. In terms of domain architecture, Protein kinase spans 312–567 (LNSKEALGGG…AAQCLAHPWL (256 aa)). Residues 318-326 (LGGGKFGAV) and Lys341 each bind ATP. Asp433 (proton acceptor) is an active-site residue. At Thr472 the chain carries Phosphothreonine. The calmodulin-binding stretch occupies residues 601–613 (IAVSAANRFKKIS).

This sequence belongs to the protein kinase superfamily. CAMK Ser/Thr protein kinase family. In terms of assembly, may interact with centrin.

It localises to the cytoplasm. The enzyme catalyses L-seryl-[myosin light chain] + ATP = O-phospho-L-seryl-[myosin light chain] + ADP + H(+). The catalysed reaction is L-threonyl-[myosin light chain] + ATP = O-phospho-L-threonyl-[myosin light chain] + ADP + H(+). Implicated in the level of global muscle contraction and cardiac function. Phosphorylates a specific serine in the N-terminus of a myosin light chain. The polypeptide is Myosin light chain kinase 2, skeletal/cardiac muscle (MYLK2) (Bos taurus (Bovine)).